A 471-amino-acid chain; its full sequence is Glutamate--tRNA ligase (471 aa).

The 'HIGH' region signature appears at 9–19 (PSPTGYLHVGG). Residues Cys-98, Cys-100, Cys-125, and His-127 each contribute to the Zn(2+) site. The 'KMSKS' region signature appears at 237 to 241 (KLSKR). Residue Lys-240 participates in ATP binding.

The protein belongs to the class-I aminoacyl-tRNA synthetase family. Glutamate--tRNA ligase type 1 subfamily. In terms of assembly, monomer. Requires Zn(2+) as cofactor.

The protein localises to the cytoplasm. It carries out the reaction tRNA(Glu) + L-glutamate + ATP = L-glutamyl-tRNA(Glu) + AMP + diphosphate. Its function is as follows. Catalyzes the attachment of glutamate to tRNA(Glu) in a two-step reaction: glutamate is first activated by ATP to form Glu-AMP and then transferred to the acceptor end of tRNA(Glu). The polypeptide is Glutamate--tRNA ligase (Salmonella choleraesuis (strain SC-B67)).